A 109-amino-acid polypeptide reads, in one-letter code: Large ribosomal subunit protein P1A (109 aa).

Residues 69-84 (APVAGGAAAPAAADGE) are compositionally biased toward low complexity. The disordered stretch occupies residues 69-109 (APVAGGAAAPAAADGEAPAEEKEEAKEEEESDEDMGFGLFD). Residues 94–103 (KEEEESDEDM) show a composition bias toward acidic residues.

Belongs to the eukaryotic ribosomal protein P1/P2 family. Component of the large ribosomal subunit (LSU). Mature yeast ribosomes consist of a small (40S) and a large (60S) subunit. The 40S small subunit contains 1 molecule of ribosomal RNA (18S rRNA) and at least 33 different proteins. The large 60S subunit contains 3 rRNA molecules (25S, 5.8S and 5S rRNA) and at least 46 different proteins. The acidic ribosomal P-proteins form the stalk structure of the 60S subunit. They are organized as a pentameric complex in which uL10/P0 interacts with 2 heterodimers of P1 and P2 proteins.

The protein localises to the cytoplasm. Its function is as follows. Component of the ribosome, a large ribonucleoprotein complex responsible for the synthesis of proteins in the cell. The small ribosomal subunit (SSU) binds messenger RNAs (mRNAs) and translates the encoded message by selecting cognate aminoacyl-transfer RNA (tRNA) molecules. The large subunit (LSU) contains the ribosomal catalytic site termed the peptidyl transferase center (PTC), which catalyzes the formation of peptide bonds, thereby polymerizing the amino acids delivered by tRNAs into a polypeptide chain. The nascent polypeptides leave the ribosome through a tunnel in the LSU and interact with protein factors that function in enzymatic processing, targeting, and the membrane insertion of nascent chains at the exit of the ribosomal tunnel. This Schizosaccharomyces pombe (strain 972 / ATCC 24843) (Fission yeast) protein is Large ribosomal subunit protein P1A (rpp101).